A 606-amino-acid chain; its full sequence is Lysosomal cobalamin transporter ABCD4 (606 aa).

Residues 39-332 form the ABC transmembrane type-1 domain; the sequence is NVLMFMTLLC…CFTQLIDLST (294 aa). 5 consecutive transmembrane segments (helical) span residues 43–63, 76–96, 190–210, 279–299, and 314–334; these read FMTL…VGLI, LDGF…NSTL, IFGY…PIVT, YLGS…GVYG, and AFVC…STTL. In terms of domain architecture, ABC transporter spans 389–603; that stretch reads LDRVSILAPS…GGGSWELTRI (215 aa). 421–428 provides a ligand contact to ATP; it reads GNTGTGKT.

Belongs to the ABC transporter superfamily. ABCD family. Peroxisomal fatty acyl CoA transporter (TC 3.A.1.203) subfamily. In terms of assembly, homodimer or heterodimer. Interacts with LMBRD1; this interaction induces the translocation of ABCD4 from the ER to the lysosome membrane. Interacts with LMBRD1 and MMACHC; this interaction ensures the transport of cobalamin from the lysosome to the cytosol.

It localises to the endoplasmic reticulum membrane. Its subcellular location is the lysosome membrane. The enzyme catalyses an R-cob(III)alamin(out) + ATP + H2O = an R-cob(III)alamin(in) + ADP + phosphate + H(+). Functionally, lysosomal membrane protein that transports cobalamin (Vitamin B12) from the lysosomal lumen to the cytosol in an ATP-dependent manner. Targeted by LMBRD1 lysosomal chaperone from the endoplasmic reticulum to the lysosomal membrane. Then forms a complex with lysosomal chaperone LMBRD1 and cytosolic MMACHC to transport cobalamin across the lysosomal membrane. This Mus musculus (Mouse) protein is Lysosomal cobalamin transporter ABCD4.